We begin with the raw amino-acid sequence, 154 residues long: RNA-binding protein PAB1135 (154 aa).

In terms of assembly, homodimer in solution.

In terms of biological role, in vitro, binds efficiently double-stranded RNAs in a non-sequence specific manner. The protein is RNA-binding protein PAB1135 of Pyrococcus abyssi (strain GE5 / Orsay).